Here is a 243-residue protein sequence, read N- to C-terminus: MILFPAIDLKDGLAVRLEQGDMDRATVFNRDPASQAGEFEALGFRYLHLVDLNGAFAGHPVNAAAVDRILETVSIPVQLGGGIRDMKTVDGWLEKGVTRVILGTAAVRDPDFVKAAAKAHPGRVVVGLDARDGNVAVQGWAETSNLPAVDIARRFEDAGVSAIIYTDIARDGLLKGLNMDATIALADAVSIPVIASGGLASLADVEALLEPRAKKLAGAITGRALYDGRLDPGAALALVAGRS.

Catalysis depends on Asp8, which acts as the Proton acceptor. Asp129 acts as the Proton donor in catalysis.

Belongs to the HisA/HisF family.

The protein localises to the cytoplasm. It carries out the reaction 1-(5-phospho-beta-D-ribosyl)-5-[(5-phospho-beta-D-ribosylamino)methylideneamino]imidazole-4-carboxamide = 5-[(5-phospho-1-deoxy-D-ribulos-1-ylimino)methylamino]-1-(5-phospho-beta-D-ribosyl)imidazole-4-carboxamide. It functions in the pathway amino-acid biosynthesis; L-histidine biosynthesis; L-histidine from 5-phospho-alpha-D-ribose 1-diphosphate: step 4/9. In Azorhizobium caulinodans (strain ATCC 43989 / DSM 5975 / JCM 20966 / LMG 6465 / NBRC 14845 / NCIMB 13405 / ORS 571), this protein is 1-(5-phosphoribosyl)-5-[(5-phosphoribosylamino)methylideneamino] imidazole-4-carboxamide isomerase.